The sequence spans 426 residues: Glutamate-1-semialdehyde 2,1-aminomutase (426 aa).

Lys-268 is subject to N6-(pyridoxal phosphate)lysine.

It belongs to the class-III pyridoxal-phosphate-dependent aminotransferase family. HemL subfamily. It depends on pyridoxal 5'-phosphate as a cofactor.

Its subcellular location is the cytoplasm. It carries out the reaction (S)-4-amino-5-oxopentanoate = 5-aminolevulinate. Its pathway is porphyrin-containing compound metabolism; protoporphyrin-IX biosynthesis; 5-aminolevulinate from L-glutamyl-tRNA(Glu): step 2/2. The chain is Glutamate-1-semialdehyde 2,1-aminomutase from Saccharolobus islandicus (strain Y.N.15.51 / Yellowstone #2) (Sulfolobus islandicus).